The primary structure comprises 656 residues: FAST kinase domain-containing protein 3, mitochondrial (656 aa).

Residues 587–645 enclose the RAP domain; that stretch reads VALCIDGPQRFCLGSKHLLGKEAIKQRHLRLLGYQVVQVPYHELELLTSRLELVDYLQR.

It belongs to the FAST kinase family.

The protein resides in the mitochondrion. Its function is as follows. Required for normal mitochondrial respiration. Increases steady-state levels and half-lives of a subset of mature mitochondrial mRNAs MT-ND2, MT-ND3, MT-CYTB, MT-CO2, and MT-ATP8/6. Promotes MT-CO1 mRNA translation and increases mitochondrial complex IV assembly and activity. This Rattus norvegicus (Rat) protein is FAST kinase domain-containing protein 3, mitochondrial (Fastkd3).